A 232-amino-acid chain; its full sequence is DNA damage-inducible transcript 4 protein (232 aa).

The tract at residues Met-1–Ala-71 is disordered. Residues Ser-9 to Arg-22 show a composition bias toward low complexity. Position 19 is a phosphoserine (Ser-19). Thr-23 and Thr-25 each carry phosphothreonine. A Phosphoserine modification is found at Ser-121.

It belongs to the DDIT4 family. In terms of assembly, monomer. Interacts with BTRC. Identified in a complex with CUL4A, DDB1 and BTRC. Interacts with TXNIP; this inhibits the proteasomal degradation of DDIT4. Phosphorylated by GSK3B; this promotes proteasomal degradation. In terms of processing, polyubiquitinated by a DCX (DDB1-CUL4A-RBX1) E3 ubiquitin-protein ligase complex with BTRC as substrate-recognition component, leading to its proteasomal degradation. In terms of tissue distribution, broadly expressed, with lowest levels in brain, skeletal muscle and intestine. Up-regulated in substantia nigra neurons from Parkinson disease patients (at protein level).

The protein localises to the mitochondrion. Its subcellular location is the cytoplasm. The protein resides in the cytosol. Functionally, regulates cell growth, proliferation and survival via inhibition of the activity of the mammalian target of rapamycin complex 1 (mTORC1). Inhibition of mTORC1 is mediated by a pathway that involves DDIT4/REDD1, AKT1, the TSC1-TSC2 complex and the GTPase RHEB. Plays an important role in responses to cellular energy levels and cellular stress, including responses to hypoxia and DNA damage. Regulates p53/TP53-mediated apoptosis in response to DNA damage via its effect on mTORC1 activity. Its role in the response to hypoxia depends on the cell type; it mediates mTORC1 inhibition in fibroblasts and thymocytes, but not in hepatocytes. Required for mTORC1-mediated defense against viral protein synthesis and virus replication. Inhibits neuronal differentiation and neurite outgrowth mediated by NGF via its effect on mTORC1 activity. Required for normal neuron migration during embryonic brain development. Plays a role in neuronal cell death. The sequence is that of DNA damage-inducible transcript 4 protein (DDIT4) from Homo sapiens (Human).